The sequence spans 334 residues: MSDQANQGDLEIRPSPLLKVINDLHSKYKSLKEGIVANYIPELAKVNPDLFSISIVTVDGQVYQVGDYQQLFTIQSISKVFAYGLALEDHGRDYVLTRVGVEPTGEAFNAIILDEQSKRPYNPMVNAGAIATTSLIKGAGATERLNRVLEMFRRYIGHDVFVDISVFTSERSTGHRNRAMAHLMLNFGMIDRNIEEALDLYFQQCAVMVNCHDLAVMAATLANRGVNPITGEQAVNSRYIKDILSVMYTCGMYNFAGEWAYKVGIPAKSGVCGGIMAVVPNLMGIAVFSPPLDIRGNSVRGVKVCEELSQQLGLHLFECMKVGNGEWGVGNCEC.

Residues serine 76, asparagine 126, glutamate 170, asparagine 177, tyrosine 201, tyrosine 253, and valine 271 each contribute to the substrate site.

It belongs to the glutaminase family. As to quaternary structure, homotetramer.

The catalysed reaction is L-glutamine + H2O = L-glutamate + NH4(+). This Nostoc sp. (strain PCC 7120 / SAG 25.82 / UTEX 2576) protein is Glutaminase.